The sequence spans 306 residues: Glycine--tRNA ligase alpha subunit (306 aa).

This sequence belongs to the class-II aminoacyl-tRNA synthetase family. In terms of assembly, tetramer of two alpha and two beta subunits.

It localises to the cytoplasm. It carries out the reaction tRNA(Gly) + glycine + ATP = glycyl-tRNA(Gly) + AMP + diphosphate. This chain is Glycine--tRNA ligase alpha subunit, found in Aliivibrio fischeri (strain ATCC 700601 / ES114) (Vibrio fischeri).